The chain runs to 312 residues: Glyoxylate/hydroxypyruvate reductase A (312 aa).

Arg-227 is an active-site residue. Residue His-275 is the Proton donor of the active site.

Belongs to the D-isomer specific 2-hydroxyacid dehydrogenase family. GhrA subfamily.

Its subcellular location is the cytoplasm. The catalysed reaction is glycolate + NADP(+) = glyoxylate + NADPH + H(+). The enzyme catalyses (R)-glycerate + NAD(+) = 3-hydroxypyruvate + NADH + H(+). It catalyses the reaction (R)-glycerate + NADP(+) = 3-hydroxypyruvate + NADPH + H(+). Its function is as follows. Catalyzes the NADPH-dependent reduction of glyoxylate and hydroxypyruvate into glycolate and glycerate, respectively. The sequence is that of Glyoxylate/hydroxypyruvate reductase A from Salmonella paratyphi C (strain RKS4594).